A 145-amino-acid chain; its full sequence is SsrA-binding protein (145 aa).

The protein belongs to the SmpB family.

Its subcellular location is the cytoplasm. In terms of biological role, required for rescue of stalled ribosomes mediated by trans-translation. Binds to transfer-messenger RNA (tmRNA), required for stable association of tmRNA with ribosomes. tmRNA and SmpB together mimic tRNA shape, replacing the anticodon stem-loop with SmpB. tmRNA is encoded by the ssrA gene; the 2 termini fold to resemble tRNA(Ala) and it encodes a 'tag peptide', a short internal open reading frame. During trans-translation Ala-aminoacylated tmRNA acts like a tRNA, entering the A-site of stalled ribosomes, displacing the stalled mRNA. The ribosome then switches to translate the ORF on the tmRNA; the nascent peptide is terminated with the 'tag peptide' encoded by the tmRNA and targeted for degradation. The ribosome is freed to recommence translation, which seems to be the essential function of trans-translation. The polypeptide is SsrA-binding protein (Mycoplasma genitalium (strain ATCC 33530 / DSM 19775 / NCTC 10195 / G37) (Mycoplasmoides genitalium)).